The chain runs to 551 residues: Ubiquitin carboxyl-terminal hydrolase 24 (551 aa).

2 disordered regions span residues 51-104 and 163-188; these read NSSV…SLRV and NEDF…TESV. The 355-residue stretch at 197-551 folds into the USP domain; it reads RGLINAGNLC…QAYVLFYKQV (355 aa). Cys206 serves as the catalytic Nucleophile. Residues 329–338 are compositionally biased toward polar residues; the sequence is SKSSVISSAN. Positions 329-349 are disordered; sequence SKSSVISSANDDGDEWETVGP. Catalysis depends on His510, which acts as the Proton acceptor.

This sequence belongs to the peptidase C19 family.

It carries out the reaction Thiol-dependent hydrolysis of ester, thioester, amide, peptide and isopeptide bonds formed by the C-terminal Gly of ubiquitin (a 76-residue protein attached to proteins as an intracellular targeting signal).. Recognizes and hydrolyzes the peptide bond at the C-terminal Gly of ubiquitin. Involved in the processing of poly-ubiquitin precursors as well as that of ubiquitinated proteins. This chain is Ubiquitin carboxyl-terminal hydrolase 24 (UBP24), found in Arabidopsis thaliana (Mouse-ear cress).